The chain runs to 515 residues: Vacuolar fusion protein CCZ1 homolog A (515 aa).

Belongs to the CCZ1 family. As to quaternary structure, interacts with MON1.

The protein localises to the endosome. Its subcellular location is the prevacuolar compartment. Plays an important role in membrane trafficking through the secretory apparatus. In complex with MON1, acts as a guanine exchange factor (GEF) for RABG3F of the Rab7 protein family. Promotes the exchange of GDP to GTP, converting RABG3F from an inactive GDP-bound form into an active GTP-bound form. The RABG3F active form is involved in protein trafficking from prevacuolar compartments (PVCs) to vacuoles. May serve as a linker between Rab5 and Rab7 protein families in PVCs and mediate PVC maturation. This chain is Vacuolar fusion protein CCZ1 homolog A, found in Arabidopsis thaliana (Mouse-ear cress).